Here is a 230-residue protein sequence, read N- to C-terminus: Orotidine 5'-phosphate decarboxylase (230 aa).

Substrate contacts are provided by residues Asp11, Lys34, 61-70 (DLKLHDIPNT), Thr117, Arg179, Gln188, Gly208, and Arg209. Catalysis depends on Lys63, which acts as the Proton donor.

It belongs to the OMP decarboxylase family. Type 1 subfamily. Homodimer.

It carries out the reaction orotidine 5'-phosphate + H(+) = UMP + CO2. It functions in the pathway pyrimidine metabolism; UMP biosynthesis via de novo pathway; UMP from orotate: step 2/2. Functionally, catalyzes the decarboxylation of orotidine 5'-monophosphate (OMP) to uridine 5'-monophosphate (UMP). In Streptococcus pyogenes serotype M1, this protein is Orotidine 5'-phosphate decarboxylase.